Consider the following 285-residue polypeptide: NAD kinase (285 aa).

The Proton acceptor role is filled by D66. NAD(+) is bound by residues 66–67 (DG), 137–138 (ND), R148, R165, D167, and 178–183 (TAYSLS).

Belongs to the NAD kinase family. It depends on a divalent metal cation as a cofactor.

It localises to the cytoplasm. It catalyses the reaction NAD(+) + ATP = ADP + NADP(+) + H(+). Functionally, involved in the regulation of the intracellular balance of NAD and NADP, and is a key enzyme in the biosynthesis of NADP. Catalyzes specifically the phosphorylation on 2'-hydroxyl of the adenosine moiety of NAD to yield NADP. In Chlorobium phaeobacteroides (strain BS1), this protein is NAD kinase.